A 99-amino-acid chain; its full sequence is MSTGRPLKSVDYEVFGRVQGVCFRMYTEDEARKIGVVGWVKNTSKGTVTGQVQGPEEKVNSMKSWLSKVGSPSSRIDRTNFSNEKTISKLEYSSFNIRY.

The residue at position 2 (Ser-2) is an N-acetylserine. In terms of domain architecture, Acylphosphatase-like spans 9-99 (SVDYEVFGRV…LEYSSFNIRY (91 aa)). Catalysis depends on residues Arg-24 and Asn-42. Ser-93 carries the post-translational modification Phosphoserine.

The protein belongs to the acylphosphatase family.

It carries out the reaction an acyl phosphate + H2O = a carboxylate + phosphate + H(+). Its function is as follows. Its physiological role is not yet clear. In Bos taurus (Bovine), this protein is Acylphosphatase-2 (ACYP2).